A 212-amino-acid chain; its full sequence is DNA-directed RNA polymerase III subunit RPC8 (212 aa).

Serine 162 is subject to Phosphoserine. A compositionally biased stretch (basic and acidic residues) spans 166-184; the sequence is RELEERAQLENEIEGKNEE. The disordered stretch occupies residues 166–194; that stretch reads RELEERAQLENEIEGKNEETPQNEKPPAY.

It belongs to the eukaryotic RPB7/RPC8 RNA polymerase subunit family. As to quaternary structure, component of the RNA polymerase III (Pol III) complex consisting of 17 subunits. RPC25/RPC8 and RPC17/RPC9 form a Pol III subcomplex.

Its subcellular location is the nucleus. Its function is as follows. DNA-dependent RNA polymerase catalyzes the transcription of DNA into RNA using the four ribonucleoside triphosphates as substrates. Specific peripheric component of RNA polymerase III which synthesizes small RNAs, such as 5S rRNA and tRNA. The RPC25/RPC8-RPC17/RPC9 subcomplex may bind Pol III transcripts emerging from the adjacent exit pore during elongation. The protein is DNA-directed RNA polymerase III subunit RPC8 (RPC25) of Saccharomyces cerevisiae (strain ATCC 204508 / S288c) (Baker's yeast).